We begin with the raw amino-acid sequence, 202 residues long: MNVLRKIVKKCRDEDTQKPSPVSAPPYDDDLWLPPPEYVPLKELTSKKNMRNFCVNGEVKACSPNGYSFRILRHILGSFNEIYSGNHRMIGLVKVVVGLALSGAPVPEGMNWVYKLRRTLIFQWADSRGPLEGEELEYSQEITWDDDTEFVGLQIRVGARQCHIQGRIWCINSNSRACQLWSDMSLQTQRSEEDKDSSLLLE.

The PPXY motif motif lies at 35–38 (PPEY). The essential for glycoprotein binding stretch occupies residues 115 to 151 (KLRRTLIFQWADSRGPLEGEELEYSQEITWDDDTEFV).

Belongs to the lyssavirus matrix protein family. As to quaternary structure, homomultimer. Interacts with nucleoprotein and with the cytoplasmic domain of glycoprotein. Interacts with host ATP6V1A; this interaction plays an important role in virion uncoating after viral entry.

The protein resides in the virion membrane. The protein localises to the host endomembrane system. It localises to the host cytoplasm. Its function is as follows. Plays a major role in assembly, budding and uncoating of virion after membrane fusion. Completely covers the ribonucleoprotein coil and keep it in condensed bullet-shaped form. Inhibits viral transcription and stimulates replication. Plays a major role in early induction of TRAIL-mediated apoptosis in infected neurons. Inhibits the integrated stress response (ISR) in the infected cell by blocking the formation of stress granules. The polypeptide is Matrix protein (M) (Rabies virus (strain CVS-11) (RABV)).